The chain runs to 414 residues: Putative transporter AmpG 4 (414 aa).

12 consecutive transmembrane segments (helical) span residues I15–V35, I44–W63, W84–P104, T109–V129, V150–I170, L177–N197, F230–A250, I268–V288, F295–L315, A324–V344, Y360–G379, and G389–N409.

The protein belongs to the major facilitator superfamily.

The protein localises to the cell inner membrane. This is Putative transporter AmpG 4 (ampG4) from Rickettsia felis (strain ATCC VR-1525 / URRWXCal2) (Rickettsia azadi).